The following is a 373-amino-acid chain: UDP-N-acetylglucosamine--N-acetylmuramyl-(pentapeptide) pyrophosphoryl-undecaprenol N-acetylglucosamine transferase (373 aa).

Residues 10-12, Asn-124, Ser-195, and Gln-297 each bind UDP-N-acetyl-alpha-D-glucosamine; that span reads TGG.

This sequence belongs to the glycosyltransferase 28 family. MurG subfamily.

Its subcellular location is the cell membrane. It carries out the reaction Mur2Ac(oyl-L-Ala-gamma-D-Glu-L-Lys-D-Ala-D-Ala)-di-trans,octa-cis-undecaprenyl diphosphate + UDP-N-acetyl-alpha-D-glucosamine = beta-D-GlcNAc-(1-&gt;4)-Mur2Ac(oyl-L-Ala-gamma-D-Glu-L-Lys-D-Ala-D-Ala)-di-trans,octa-cis-undecaprenyl diphosphate + UDP + H(+). It functions in the pathway cell wall biogenesis; peptidoglycan biosynthesis. Functionally, cell wall formation. Catalyzes the transfer of a GlcNAc subunit on undecaprenyl-pyrophosphoryl-MurNAc-pentapeptide (lipid intermediate I) to form undecaprenyl-pyrophosphoryl-MurNAc-(pentapeptide)GlcNAc (lipid intermediate II). This chain is UDP-N-acetylglucosamine--N-acetylmuramyl-(pentapeptide) pyrophosphoryl-undecaprenol N-acetylglucosamine transferase, found in Oenococcus oeni (strain ATCC BAA-331 / PSU-1).